Reading from the N-terminus, the 574-residue chain is DNA-directed primase/polymerase protein (574 aa).

Residues 2 to 22 (KRKWEERVKKVEELASYYERN) are a coiled coil. Residues arginine 76, 116–118 (DLE), 167–171 (KFSRH), 291–294 (RNFR), and lysine 300 each bind substrate. Residues aspartate 116 and glutamate 118 each contribute to the Mn(2+) site. Residues cysteine 424, histidine 431, cysteine 451, and cysteine 456 each coordinate Zn(2+). The Zinc knuckle motif signature appears at 424-457 (CENIGRAHRSNNIMILVDLKKEVWYQKCHDPVCR).

It belongs to the eukaryotic-type primase small subunit family. Requires Mn(2+) as cofactor.

The protein localises to the nucleus. It is found in the mitochondrion matrix. It localises to the chromosome. It carries out the reaction ssDNA + n NTP = ssDNA/pppN(pN)n-1 hybrid + (n-1) diphosphate.. The catalysed reaction is DNA(n) + a 2'-deoxyribonucleoside 5'-triphosphate = DNA(n+1) + diphosphate. Functionally, DNA primase and DNA polymerase required to tolerate replication-stalling lesions by bypassing them. Required to facilitate mitochondrial and nuclear replication fork progression by initiating de novo DNA synthesis using dNTPs and acting as an error-prone DNA polymerase able to bypass certain DNA lesions. Shows a high capacity to tolerate DNA damage lesions such as 8oxoG and abasic sites in DNA. Provides different translesion synthesis alternatives when DNA replication is stalled: able to synthesize DNA primers downstream of lesions, such as UV lesions, R-loops and G-quadruplexes, to allow DNA replication to continue. Can also realign primers ahead of 'unreadable lesions' such as abasic sites and 6-4 photoproduct (6-4 pyrimidine-pyrimidinone), thereby skipping the lesion. Repriming avoids fork degradation while leading to accumulation of internal ssDNA gaps behind the forks. Also able to incorporate nucleotides opposite DNA lesions such as 8oxoG, like a regular translesion synthesis DNA polymerase. Also required for reinitiating stalled forks after ultraviolet (UV) damage during nuclear DNA replication. Required for mitochondrial DNA (mtDNA) synthesis and replication, by reinitiating synthesis after UV damage or in the presence of chain-terminating nucleotides. In addition to its role in DNA damage response, also required to maintain efficient nuclear and mitochondrial DNA replication in unperturbed cells. The protein is DNA-directed primase/polymerase protein of Gallus gallus (Chicken).